Consider the following 143-residue polypeptide: AP-2 complex subunit sigma (143 aa).

This sequence belongs to the adaptor complexes small subunit family. Adaptor protein complex 2 (AP-2) is a heterotetramer composed of two large adaptins (alpha-type subunit APL3 and beta-type subunit APL1), a medium chain (mu-type subunit APM4) and a small adaptin (sigma-type subunit APS2).

The protein localises to the cell membrane. It is found in the membrane. The protein resides in the coated pit. Functionally, component of the adaptor complexes which link clathrin to receptors in coated vesicles. Clathrin-associated protein complexes are believed to interact with the cytoplasmic tails of membrane proteins, leading to their selection and concentration. This is AP-2 complex subunit sigma (APS2) from Gibberella zeae (strain ATCC MYA-4620 / CBS 123657 / FGSC 9075 / NRRL 31084 / PH-1) (Wheat head blight fungus).